Consider the following 252-residue polypeptide: 2-succinyl-6-hydroxy-2,4-cyclohexadiene-1-carboxylate synthase (252 aa).

Belongs to the AB hydrolase superfamily. MenH family. Monomer.

It carries out the reaction 5-enolpyruvoyl-6-hydroxy-2-succinyl-cyclohex-3-ene-1-carboxylate = (1R,6R)-6-hydroxy-2-succinyl-cyclohexa-2,4-diene-1-carboxylate + pyruvate. It participates in quinol/quinone metabolism; 1,4-dihydroxy-2-naphthoate biosynthesis; 1,4-dihydroxy-2-naphthoate from chorismate: step 3/7. It functions in the pathway quinol/quinone metabolism; menaquinone biosynthesis. In terms of biological role, catalyzes a proton abstraction reaction that results in 2,5-elimination of pyruvate from 2-succinyl-5-enolpyruvyl-6-hydroxy-3-cyclohexene-1-carboxylate (SEPHCHC) and the formation of 2-succinyl-6-hydroxy-2,4-cyclohexadiene-1-carboxylate (SHCHC). The polypeptide is 2-succinyl-6-hydroxy-2,4-cyclohexadiene-1-carboxylate synthase (Salmonella enteritidis PT4 (strain P125109)).